Reading from the N-terminus, the 260-residue chain is Octanoyltransferase (260 aa).

Residues 42-241 (PQVPDGLLLL…SFCQVFGLQA (200 aa)) enclose the BPL/LPL catalytic domain. Substrate-binding positions include 97 to 104 (RGGEVTYH), 172 to 174 (AIG), and 185 to 187 (GFA). Cys-203 acts as the Acyl-thioester intermediate in catalysis.

It belongs to the LipB family.

The protein resides in the cytoplasm. It carries out the reaction octanoyl-[ACP] + L-lysyl-[protein] = N(6)-octanoyl-L-lysyl-[protein] + holo-[ACP] + H(+). It participates in protein modification; protein lipoylation via endogenous pathway; protein N(6)-(lipoyl)lysine from octanoyl-[acyl-carrier-protein]: step 1/2. Catalyzes the transfer of endogenously produced octanoic acid from octanoyl-acyl-carrier-protein onto the lipoyl domains of lipoate-dependent enzymes. Lipoyl-ACP can also act as a substrate although octanoyl-ACP is likely to be the physiological substrate. This chain is Octanoyltransferase, found in Synechococcus sp. (strain JA-3-3Ab) (Cyanobacteria bacterium Yellowstone A-Prime).